The following is a 546-amino-acid chain: Thermosome subunit beta (546 aa).

It belongs to the TCP-1 chaperonin family. As to quaternary structure, forms a Heterooligomeric complex of two stacked eight-membered rings.

In terms of biological role, molecular chaperone; binds unfolded polypeptides in vitro, and has a weak ATPase activity. The sequence is that of Thermosome subunit beta (thsB) from Thermococcus kodakarensis (strain ATCC BAA-918 / JCM 12380 / KOD1) (Pyrococcus kodakaraensis (strain KOD1)).